Reading from the N-terminus, the 218-residue chain is Thiopurine S-methyltransferase (218 aa).

Tryptophan 10, leucine 45, glutamate 66, and arginine 123 together coordinate S-adenosyl-L-methionine.

Belongs to the class I-like SAM-binding methyltransferase superfamily. TPMT family.

It is found in the cytoplasm. It carries out the reaction S-adenosyl-L-methionine + a thiopurine = S-adenosyl-L-homocysteine + a thiopurine S-methylether.. The polypeptide is Thiopurine S-methyltransferase (Shewanella baltica (strain OS223)).